Consider the following 229-residue polypeptide: Large ribosomal subunit protein uL1c (229 aa).

This sequence belongs to the universal ribosomal protein uL1 family. As to quaternary structure, part of the 50S ribosomal subunit.

It localises to the plastid. The protein resides in the chloroplast. Its function is as follows. Binds directly to 23S rRNA. Might be involved in E site tRNA release (Potential). This is Large ribosomal subunit protein uL1c (rpl1) from Porphyra purpurea (Red seaweed).